The primary structure comprises 704 residues: Polyribonucleotide nucleotidyltransferase (704 aa).

2 residues coordinate Mg(2+): D488 and D494. The KH domain occupies 555–614; the sequence is PRITTIKINPEKIRDVIGKGGATIRALTEETGTTIELDDDGTVKIASSNGEATKEAIRRI. Residues 624 to 692 enclose the S1 motif domain; that stretch reads GTVYNGKVVR…RQGRVRLSMK (69 aa).

The protein belongs to the polyribonucleotide nucleotidyltransferase family. As to quaternary structure, component of the RNA degradosome, which is a multiprotein complex involved in RNA processing and mRNA degradation. Requires Mg(2+) as cofactor.

The protein localises to the cytoplasm. The enzyme catalyses RNA(n+1) + phosphate = RNA(n) + a ribonucleoside 5'-diphosphate. Functionally, involved in mRNA degradation. Catalyzes the phosphorolysis of single-stranded polyribonucleotides processively in the 3'- to 5'-direction. This Shewanella halifaxensis (strain HAW-EB4) protein is Polyribonucleotide nucleotidyltransferase.